The sequence spans 415 residues: Probable glucan 1,3-beta-glucosidase A (415 aa).

The first 22 residues, 1-22 (MLSRLSQTALVALSLMTVLTEA), serve as a signal peptide directing secretion. E210 serves as the catalytic Proton donor. 2 disulfides stabilise this stretch: C290–C414 and C315–C341. The active-site Nucleophile is E307. The interval 335-359 (SPRYGDCGNKRQGSSSGLSEQERSD) is disordered.

It belongs to the glycosyl hydrolase 5 (cellulase A) family. As to quaternary structure, monomer. Requires Mn(2+) as cofactor.

Its subcellular location is the secreted. The enzyme catalyses Successive hydrolysis of beta-D-glucose units from the non-reducing ends of (1-&gt;3)-beta-D-glucans, releasing alpha-glucose.. Beta-glucanases participate in the metabolism of beta-glucan, the main structural component of the cell wall. It could also function biosynthetically as a transglycosylase. The chain is Probable glucan 1,3-beta-glucosidase A (exgA) from Aspergillus clavatus (strain ATCC 1007 / CBS 513.65 / DSM 816 / NCTC 3887 / NRRL 1 / QM 1276 / 107).